We begin with the raw amino-acid sequence, 568 residues long: Sphingosine-1-phosphate lyase 1 (568 aa).

Over 1 to 40 the chain is Lumenal; that stretch reads MPSTDLLMLKAFEPYLEILEVYSTKAKNYVNGHCTKYEPW. The chain crosses the membrane as a helical; Signal-anchor for type III membrane protein span at residues 41 to 61; the sequence is QLIAWSVVWTLLIVWGYEFVF. The Cytoplasmic segment spans residues 62 to 568; the sequence is QPESLWSRFK…SQMNGSPKPH (507 aa). N6-(pyridoxal phosphate)lysine; alternate is present on K353. At K353 the chain carries N6-acetyllysine; alternate. 3'-nitrotyrosine is present on residues Y356 and Y366. Phosphoserine is present on S564.

This sequence belongs to the group II decarboxylase family. Sphingosine-1-phosphate lyase subfamily. In terms of assembly, homodimer. It depends on pyridoxal 5'-phosphate as a cofactor. As to expression, ubiquitously expressed. Expressed in fetal and adult adrenal gland (at protein level).

It is found in the endoplasmic reticulum membrane. It carries out the reaction sphinganine 1-phosphate = hexadecanal + phosphoethanolamine. It catalyses the reaction sphing-4-enine 1-phosphate = (2E)-hexadecenal + phosphoethanolamine. It participates in lipid metabolism; sphingolipid metabolism. In terms of biological role, cleaves phosphorylated sphingoid bases (PSBs), such as sphingosine-1-phosphate, into fatty aldehydes and phosphoethanolamine. Elevates stress-induced ceramide production and apoptosis. Required for global lipid homeostasis in liver and cholesterol homeostasis in fibroblasts. Involved in the regulation of pro-inflammatory response and neutrophil trafficking. Modulates neuronal autophagy via phosphoethanolamine production which regulates accumulation of aggregate-prone proteins such as APP. Seems to play a role in establishing neuronal contact sites and axonal maintenance. The protein is Sphingosine-1-phosphate lyase 1 of Homo sapiens (Human).